Here is a 103-residue protein sequence, read N- to C-terminus: UPF0145 protein BLi01945/BL05168 (103 aa).

This sequence belongs to the UPF0145 family.

This is UPF0145 protein BLi01945/BL05168 from Bacillus licheniformis (strain ATCC 14580 / DSM 13 / JCM 2505 / CCUG 7422 / NBRC 12200 / NCIMB 9375 / NCTC 10341 / NRRL NRS-1264 / Gibson 46).